Here is a 734-residue protein sequence, read N- to C-terminus: Photosystem I P700 chlorophyll a apoprotein A2 (734 aa).

The next 8 membrane-spanning stretches (helical) occupy residues 46-69 (IFAS…FHVA), 135-158 (LYTG…FHLQ), 175-199 (LDHH…HVAI), 273-291 (IAHH…GHMY), 330-353 (LHFQ…QHMY), 369-395 (AALY…IFFI), 417-439 (AIIS…LYVH), and 517-535 (FLVH…LILV). [4Fe-4S] cluster-binding residues include C559 and C568. The next 2 helical transmembrane spans lie at 575-596 (AFYL…YWHW) and 643-665 (LSVW…MFLI). Positions 654, 662, and 670 each coordinate chlorophyll a. Residue W671 coordinates phylloquinone. A helical transmembrane segment spans residues 707–727 (LVGLAHFSVGYIFTYAAFLIA).

Belongs to the PsaA/PsaB family. The PsaA/B heterodimer binds the P700 chlorophyll special pair and subsequent electron acceptors. PSI consists of a core antenna complex that captures photons, and an electron transfer chain that converts photonic excitation into a charge separation. The eukaryotic PSI reaction center is composed of at least 11 subunits. The cofactor is P700 is a chlorophyll a/chlorophyll a' dimer, A0 is one or more chlorophyll a, A1 is one or both phylloquinones and FX is a shared 4Fe-4S iron-sulfur center..

It localises to the plastid. The protein resides in the chloroplast thylakoid membrane. The catalysed reaction is reduced [plastocyanin] + hnu + oxidized [2Fe-2S]-[ferredoxin] = oxidized [plastocyanin] + reduced [2Fe-2S]-[ferredoxin]. In terms of biological role, psaA and PsaB bind P700, the primary electron donor of photosystem I (PSI), as well as the electron acceptors A0, A1 and FX. PSI is a plastocyanin-ferredoxin oxidoreductase, converting photonic excitation into a charge separation, which transfers an electron from the donor P700 chlorophyll pair to the spectroscopically characterized acceptors A0, A1, FX, FA and FB in turn. Oxidized P700 is reduced on the lumenal side of the thylakoid membrane by plastocyanin. The chain is Photosystem I P700 chlorophyll a apoprotein A2 from Cycas taitungensis (Prince sago).